Reading from the N-terminus, the 141-residue chain is N,N-dimethylformamidase alpha subunit (141 aa).

Heterotetramer of two DmfA1 (alpha) and two DmfA2 (beta) subunits.

The catalysed reaction is N,N-dimethylformamide + H2O = dimethylamine + formate. In terms of biological role, hydrolyzes N,N-dimethylformamide, and to a lesser extent N,N-dimethylacetamide and N,N-diethylacetamide. Has no activity against the substituted amides N-methylformamide, N-ethylformamide, N-ethylformamide and N-methylacetamide or the unsubstituted amides formamide, nicotinamide, acetoamide, benzamide, acetamide and acrylamide. The protein is N,N-dimethylformamidase alpha subunit of Paracoccus aminophilus.